Reading from the N-terminus, the 215-residue chain is Large ribosomal subunit protein uL16 (215 aa).

Belongs to the universal ribosomal protein uL16 family. As to quaternary structure, component of the small ribosomal subunit. Mature ribosomes consist of a small (40S) and a large (60S) subunit. The 40S subunit contains about 33 different proteins and 1 molecule of RNA (18S). The 60S subunit contains about 49 different proteins and 3 molecules of RNA (25S, 5.8S and 5S).

The protein is Large ribosomal subunit protein uL16 (RPL10) of Euglena gracilis.